The primary structure comprises 215 residues: Small ribosomal subunit protein eS1 (215 aa).

Belongs to the eukaryotic ribosomal protein eS1 family.

The protein is Small ribosomal subunit protein eS1 of Halorubrum lacusprofundi (strain ATCC 49239 / DSM 5036 / JCM 8891 / ACAM 34).